The following is a 414-amino-acid chain: MIOREX complex component 10 (414 aa).

A mitochondrion-targeting transit peptide spans 1–29; that stretch reads MLSFRSLTSTFGFVSRFQIRRLGTSLSIQ. At 30 to 373 the chain is on the mitochondrial matrix side; that stretch reads NLEVQDGRWK…ISLLNERNST (344 aa). Residues 374–394 form a helical membrane-spanning segment; it reads FLEWIIIYLIAFELCFEIYHF. At 395 to 414 the chain is on the mitochondrial intermembrane side; it reads YQKYSSYCSEPTNDDLDATK.

It belongs to the RMD1/sif2 family. As to quaternary structure, associates with the mitochondrial ribosome.

The protein localises to the mitochondrion inner membrane. Its function is as follows. Component of MIOREX complexes, large expressome-like assemblies of ribosomes with factors involved in all the steps of post-transcriptional gene expression. The chain is MIOREX complex component 10 from Saccharomyces cerevisiae (strain ATCC 204508 / S288c) (Baker's yeast).